The chain runs to 588 residues: Aspartate--tRNA ligase (588 aa).

An L-aspartate-binding site is contributed by E174. The segment at 198 to 201 (QLFK) is aspartate. R220 serves as a coordination point for L-aspartate. Residues 220–222 (RDE) and Q229 each bind ATP. L-aspartate is bound at residue H448. Residue E482 coordinates ATP. R489 is an L-aspartate binding site. Residue 534 to 537 (GIDR) coordinates ATP.

The protein belongs to the class-II aminoacyl-tRNA synthetase family. Type 1 subfamily. Homodimer.

Its subcellular location is the cytoplasm. It catalyses the reaction tRNA(Asp) + L-aspartate + ATP = L-aspartyl-tRNA(Asp) + AMP + diphosphate. Catalyzes the attachment of L-aspartate to tRNA(Asp) in a two-step reaction: L-aspartate is first activated by ATP to form Asp-AMP and then transferred to the acceptor end of tRNA(Asp). The sequence is that of Aspartate--tRNA ligase from Xanthomonas oryzae pv. oryzae (strain MAFF 311018).